The sequence spans 424 residues: Double-stranded RNA-binding protein 8 (424 aa).

A compositionally biased stretch (pro residues) spans M1–P10. The tract at residues M1–A22 is disordered. DRBM domains lie at V33 to K102 and L118 to G185. Basic and acidic residues-rich tracts occupy residues K287–H308 and D318–R328. The disordered stretch occupies residues K287–I330.

Its function is as follows. Binds double-stranded RNA. The chain is Double-stranded RNA-binding protein 8 (DRB8) from Oryza sativa subsp. japonica (Rice).